We begin with the raw amino-acid sequence, 1026 residues long: Exportin-T (1026 aa).

It belongs to the exportin family.

Its subcellular location is the nucleus. It localises to the cytoplasm. Functionally, tRNA nucleus export receptor which facilitates tRNA translocation across the nuclear pore complex. Involved in pre-tRNA splicing, probably by affecting the interaction of pre-tRNA with splicing endonuclease. This is Exportin-T (los1) from Neurospora crassa (strain ATCC 24698 / 74-OR23-1A / CBS 708.71 / DSM 1257 / FGSC 987).